The sequence spans 404 residues: L-cysteine:1D-myo-inositol 2-amino-2-deoxy-alpha-D-glucopyranoside ligase (404 aa).

Cys47 provides a ligand contact to Zn(2+). Residues 47-50 (CGIT), Thr62, and 85-87 (NIT) contribute to the L-cysteinyl-5'-AMP site. Positions 49–59 (ITPYDSTHLGH) match the 'HIGH' region motif. A 'ERGGDP' region motif is present at residues 188–193 (ERGGDP). Trp228 lines the L-cysteinyl-5'-AMP pocket. Cys232 provides a ligand contact to Zn(2+). Residue 250–252 (GSD) coordinates L-cysteinyl-5'-AMP. His257 is a Zn(2+) binding site. Residue Ile284 coordinates L-cysteinyl-5'-AMP. A 'KMSKS' region motif is present at residues 290–294 (KMSKS).

The protein belongs to the class-I aminoacyl-tRNA synthetase family. MshC subfamily. Monomer. Zn(2+) is required as a cofactor.

It catalyses the reaction 1D-myo-inositol 2-amino-2-deoxy-alpha-D-glucopyranoside + L-cysteine + ATP = 1D-myo-inositol 2-(L-cysteinylamino)-2-deoxy-alpha-D-glucopyranoside + AMP + diphosphate + H(+). Its function is as follows. Catalyzes the ATP-dependent condensation of GlcN-Ins and L-cysteine to form L-Cys-GlcN-Ins. The chain is L-cysteine:1D-myo-inositol 2-amino-2-deoxy-alpha-D-glucopyranoside ligase from Corynebacterium striatum.